We begin with the raw amino-acid sequence, 141 residues long: Hemoglobin subunit alpha (141 aa).

In terms of domain architecture, Globin spans 1–141; the sequence is VLSAADKGHV…VSTVLTSKYR (141 aa). Ser3 bears the Phosphoserine mark. Residues Lys7 and Lys11 each carry the N6-succinyllysine modification. N6-acetyllysine; alternate is present on Lys16. Residue Lys16 is modified to N6-succinyllysine; alternate. Tyr24 is subject to Phosphotyrosine. Ser35 bears the Phosphoserine mark. Position 40 is an N6-succinyllysine (Lys40). Phosphoserine is present on Ser49. His58 contacts O2. A heme b-binding site is contributed by His87. At Ser102 the chain carries Phosphoserine. Thr108 carries the phosphothreonine modification. Ser124 is modified (phosphoserine). Residues Thr134 and Thr137 each carry the phosphothreonine modification. At Ser138 the chain carries Phosphoserine.

Belongs to the globin family. As to quaternary structure, heterotetramer of two alpha chains and two beta chains. Red blood cells.

Functionally, involved in oxygen transport from the lung to the various peripheral tissues. In terms of biological role, hemopressin acts as an antagonist peptide of the cannabinoid receptor CNR1. Hemopressin-binding efficiently blocks cannabinoid receptor CNR1 and subsequent signaling. The chain is Hemoglobin subunit alpha (HBA) from Macropus giganteus (Eastern gray kangaroo).